The sequence spans 202 residues: Na(+)-translocating NADH-quinone reductase subunit E (202 aa).

6 helical membrane passes run 11 to 31 (AVFV…FIAI), 35 to 55 (VETA…TMPV), 79 to 99 (LSFL…QILE), 114 to 134 (GVFL…LFMV), 144 to 164 (TVYG…LAGI), and 180 to 200 (LGIT…FSGV).

Belongs to the NqrDE/RnfAE family. As to quaternary structure, composed of six subunits; NqrA, NqrB, NqrC, NqrD, NqrE and NqrF.

Its subcellular location is the cell inner membrane. It catalyses the reaction a ubiquinone + n Na(+)(in) + NADH + H(+) = a ubiquinol + n Na(+)(out) + NAD(+). NQR complex catalyzes the reduction of ubiquinone-1 to ubiquinol by two successive reactions, coupled with the transport of Na(+) ions from the cytoplasm to the periplasm. NqrA to NqrE are probably involved in the second step, the conversion of ubisemiquinone to ubiquinol. The sequence is that of Na(+)-translocating NADH-quinone reductase subunit E from Ectopseudomonas mendocina (strain ymp) (Pseudomonas mendocina).